The primary structure comprises 124 residues: Urease subunit beta (124 aa).

This sequence belongs to the urease beta subunit family. Heterotrimer of UreA (gamma), UreB (beta) and UreC (alpha) subunits. Three heterotrimers associate to form the active enzyme.

It localises to the cytoplasm. The catalysed reaction is urea + 2 H2O + H(+) = hydrogencarbonate + 2 NH4(+). The protein operates within nitrogen metabolism; urea degradation; CO(2) and NH(3) from urea (urease route): step 1/1. The sequence is that of Urease subunit beta from Bacillus subtilis (strain 168).